Reading from the N-terminus, the 406-residue chain is Pyruvate dehydrogenase E1 component subunit beta-2, chloroplastic (406 aa).

The N-terminal 44 residues, M1–V44, are a transit peptide targeting the chloroplast. E142 provides a ligand contact to thiamine diphosphate. Positions 195, 243, 244, and 248 each coordinate K(+).

Tetramer of 2 alpha and 2 beta subunits. Requires thiamine diphosphate as cofactor.

Its subcellular location is the plastid. It localises to the chloroplast. It carries out the reaction N(6)-[(R)-lipoyl]-L-lysyl-[protein] + pyruvate + H(+) = N(6)-[(R)-S(8)-acetyldihydrolipoyl]-L-lysyl-[protein] + CO2. The pyruvate dehydrogenase complex catalyzes the overall conversion of pyruvate to acetyl-CoA and CO(2). It contains multiple copies of three enzymatic components: pyruvate dehydrogenase (E1), dihydrolipoamide acetyltransferase (E2) and lipoamide dehydrogenase (E3). In Arabidopsis thaliana (Mouse-ear cress), this protein is Pyruvate dehydrogenase E1 component subunit beta-2, chloroplastic (PDH-E1 BETA).